The sequence spans 1024 residues: Zn(2)-C6 fungal-type transcription factor FTF1a (1024 aa).

Positions 137–164 (CIACRRKKVRCSGEKPACKHCLHSHIPC) form a DNA-binding region, zn(2)-C6 fungal-type.

The protein localises to the nucleus. In terms of biological role, zn(2)-C6 fungal-type transcription factor that has a role in the establishment of the fungus within the plant and/or the progress of the disease. Regulates the expression of virulence factors such as SIX1 and SIX6. This is Zn(2)-C6 fungal-type transcription factor FTF1a from Fusarium oxysporum f. sp. lycopersici (strain 4287 / CBS 123668 / FGSC 9935 / NRRL 34936) (Fusarium vascular wilt of tomato).